A 311-amino-acid polypeptide reads, in one-letter code: Cytochrome f (311 aa).

Residues 1–27 form the signal peptide; sequence MRRHLSLVLGSLVIGLALLIAPGASWA. Positions 28, 48, 51, and 52 each coordinate heme. Residues 277-297 traverse the membrane as a helical segment; the sequence is IYGLLAFFAAVAIAQIMLVLK.

Belongs to the cytochrome f family. As to quaternary structure, the 4 large subunits of the cytochrome b6-f complex are cytochrome b6, subunit IV (17 kDa polypeptide, PetD), cytochrome f and the Rieske protein, while the 4 small subunits are PetG, PetL, PetM and PetN. The complex functions as a dimer. Requires heme as cofactor.

It is found in the cellular thylakoid membrane. Component of the cytochrome b6-f complex, which mediates electron transfer between photosystem II (PSII) and photosystem I (PSI), cyclic electron flow around PSI, and state transitions. This is Cytochrome f from Synechococcus sp. (strain CC9902).